The chain runs to 428 residues: Phosphomethylpyrimidine synthase 2 (428 aa).

Substrate-binding positions include Met-94, Tyr-123, His-162, 184–186 (SRG), 225–228 (NGMR), and Glu-264. His-268 contributes to the Zn(2+) binding site. Tyr-291 is a binding site for substrate. Residue His-332 participates in Zn(2+) binding. [4Fe-4S] cluster is bound by residues Cys-408, Cys-411, and Cys-415.

The protein belongs to the ThiC family. [4Fe-4S] cluster is required as a cofactor.

The catalysed reaction is 5-amino-1-(5-phospho-beta-D-ribosyl)imidazole + S-adenosyl-L-methionine = 4-amino-2-methyl-5-(phosphooxymethyl)pyrimidine + CO + 5'-deoxyadenosine + formate + L-methionine + 3 H(+). It participates in cofactor biosynthesis; thiamine diphosphate biosynthesis. Catalyzes the synthesis of the hydroxymethylpyrimidine phosphate (HMP-P) moiety of thiamine from aminoimidazole ribotide (AIR) in a radical S-adenosyl-L-methionine (SAM)-dependent reaction. The sequence is that of Phosphomethylpyrimidine synthase 2 from Methanosarcina acetivorans (strain ATCC 35395 / DSM 2834 / JCM 12185 / C2A).